The primary structure comprises 45 residues: Unknown protein from spots 23/28/205 of 2D-PAGE of thylakoid (45 aa).

It is found in the plastid. Its subcellular location is the chloroplast thylakoid. In Pisum sativum (Garden pea), this protein is Unknown protein from spots 23/28/205 of 2D-PAGE of thylakoid.